Reading from the N-terminus, the 444-residue chain is Argininosuccinate synthase (444 aa).

ATP contacts are provided by residues 18–26 and alanine 44; that span reads AFSGGLDTS. Tyrosine 100 is a binding site for L-citrulline. The ATP site is built by glycine 130 and threonine 132. Residues threonine 132, asparagine 136, and aspartate 137 each coordinate L-aspartate. Residue asparagine 136 coordinates L-citrulline. Aspartate 137 contributes to the ATP binding site. Arginine 140 and serine 193 together coordinate L-citrulline. ATP is bound at residue aspartate 195. L-citrulline contacts are provided by threonine 202, glutamate 204, and glutamate 281.

This sequence belongs to the argininosuccinate synthase family. Type 2 subfamily. As to quaternary structure, homotetramer.

Its subcellular location is the cytoplasm. The enzyme catalyses L-citrulline + L-aspartate + ATP = 2-(N(omega)-L-arginino)succinate + AMP + diphosphate + H(+). Its pathway is amino-acid biosynthesis; L-arginine biosynthesis; L-arginine from L-ornithine and carbamoyl phosphate: step 2/3. The chain is Argininosuccinate synthase from Haemophilus influenzae (strain PittEE).